The following is a 340-amino-acid chain: UDP-3-O-acylglucosamine N-acyltransferase (340 aa).

His-237 functions as the Proton acceptor in the catalytic mechanism.

Belongs to the transferase hexapeptide repeat family. LpxD subfamily. Homotrimer.

It catalyses the reaction a UDP-3-O-[(3R)-3-hydroxyacyl]-alpha-D-glucosamine + a (3R)-hydroxyacyl-[ACP] = a UDP-2-N,3-O-bis[(3R)-3-hydroxyacyl]-alpha-D-glucosamine + holo-[ACP] + H(+). It participates in bacterial outer membrane biogenesis; LPS lipid A biosynthesis. Functionally, catalyzes the N-acylation of UDP-3-O-acylglucosamine using 3-hydroxyacyl-ACP as the acyl donor. Is involved in the biosynthesis of lipid A, a phosphorylated glycolipid that anchors the lipopolysaccharide to the outer membrane of the cell. The sequence is that of UDP-3-O-acylglucosamine N-acyltransferase from Desulfosudis oleivorans (strain DSM 6200 / JCM 39069 / Hxd3) (Desulfococcus oleovorans).